The chain runs to 284 residues: Thymidylate synthase (284 aa).

DUMP is bound at residue arginine 34. (6R)-5,10-methylene-5,6,7,8-tetrahydrofolate is bound at residue histidine 64. 139–140 (RR) serves as a coordination point for dUMP. The Nucleophile role is filled by cysteine 159. DUMP-binding positions include 186–189 (RSAD), asparagine 197, and 227–229 (HIY). Residue aspartate 189 participates in (6R)-5,10-methylene-5,6,7,8-tetrahydrofolate binding. Position 283 (alanine 283) interacts with (6R)-5,10-methylene-5,6,7,8-tetrahydrofolate.

This sequence belongs to the thymidylate synthase family. Bacterial-type ThyA subfamily. Homodimer.

It localises to the cytoplasm. The catalysed reaction is dUMP + (6R)-5,10-methylene-5,6,7,8-tetrahydrofolate = 7,8-dihydrofolate + dTMP. It participates in pyrimidine metabolism; dTTP biosynthesis. Catalyzes the reductive methylation of 2'-deoxyuridine-5'-monophosphate (dUMP) to 2'-deoxythymidine-5'-monophosphate (dTMP) while utilizing 5,10-methylenetetrahydrofolate (mTHF) as the methyl donor and reductant in the reaction, yielding dihydrofolate (DHF) as a by-product. This enzymatic reaction provides an intracellular de novo source of dTMP, an essential precursor for DNA biosynthesis. This is Thymidylate synthase from Polaromonas sp. (strain JS666 / ATCC BAA-500).